The primary structure comprises 542 residues: Esterase 6 (542 aa).

An N-terminal signal peptide occupies residues methionine 1–alanine 19. A glycan (N-linked (GlcNAc...) asparagine) is linked at asparagine 40. An intrachain disulfide couples cysteine 84 to cysteine 103. Serine 207 functions as the Acyl-ester intermediate in the catalytic mechanism. Residues cysteine 259 and cysteine 271 are joined by a disulfide bond. N-linked (GlcNAc...) asparagine glycosylation is found at asparagine 418 and asparagine 454. Histidine 464 acts as the Charge relay system in catalysis. A disulfide bridge links cysteine 512 with cysteine 533.

Belongs to the type-B carboxylesterase/lipase family. In terms of assembly, monomer.

The protein localises to the secreted. The catalysed reaction is a carboxylic ester + H2O = an alcohol + a carboxylate + H(+). Functionally, transferred from the ejaculatory bulbs of males to the female genitals upon copulation, plays an important role in the reproductive biology. This Drosophila simulans (Fruit fly) protein is Esterase 6 (Est-6).